A 406-amino-acid chain; its full sequence is 3-oxoacyl-[acyl-carrier-protein] synthase 1 (406 aa).

In terms of domain architecture, Ketosynthase family 3 (KS3) spans 1–405 (MRRVVITGIG…GTNVSLIVKK (405 aa)). Catalysis depends on for beta-ketoacyl synthase activity residues Cys-164, His-299, and His-335.

Belongs to the thiolase-like superfamily. Beta-ketoacyl-ACP synthases family. As to quaternary structure, homodimer.

It is found in the cytoplasm. The catalysed reaction is a fatty acyl-[ACP] + malonyl-[ACP] + H(+) = a 3-oxoacyl-[ACP] + holo-[ACP] + CO2. It carries out the reaction (3Z)-decenoyl-[ACP] + malonyl-[ACP] + H(+) = 3-oxo-(5Z)-dodecenoyl-[ACP] + holo-[ACP] + CO2. It functions in the pathway lipid metabolism; fatty acid biosynthesis. In terms of biological role, involved in the type II fatty acid elongation cycle. Catalyzes the elongation of a wide range of acyl-ACP by the addition of two carbons from malonyl-ACP to an acyl acceptor. Can also use unsaturated fatty acids. Catalyzes a key reaction in unsaturated fatty acid (UFA) synthesis, the elongation of the cis-3-decenoyl-ACP produced by FabA. This chain is 3-oxoacyl-[acyl-carrier-protein] synthase 1 (fabB), found in Buchnera aphidicola subsp. Acyrthosiphon pisum (strain APS) (Acyrthosiphon pisum symbiotic bacterium).